A 445-amino-acid polypeptide reads, in one-letter code: Phosphoglucosamine mutase (445 aa).

Ser102 functions as the Phosphoserine intermediate in the catalytic mechanism. Mg(2+) contacts are provided by Ser102, Asp241, Asp243, and Asp245. Position 102 is a phosphoserine (Ser102).

The protein belongs to the phosphohexose mutase family. The cofactor is Mg(2+). Activated by phosphorylation.

It catalyses the reaction alpha-D-glucosamine 1-phosphate = D-glucosamine 6-phosphate. Its function is as follows. Catalyzes the conversion of glucosamine-6-phosphate to glucosamine-1-phosphate. In Shewanella piezotolerans (strain WP3 / JCM 13877), this protein is Phosphoglucosamine mutase.